A 223-amino-acid chain; its full sequence is Sigma non-opioid intracellular receptor 1 (223 aa).

Residues 1 to 9 lie on the Lumenal side of the membrane; the sequence is MQWAAGRRW. The interval 2–8 is targeting to endoplasmic reticulum-associated lipid droplets; that stretch reads QWAAGRR. Residues 10–30 form a helical membrane-spanning segment; the sequence is AWITLFLTIVAVLIQAVWLWL. Topologically, residues 31–223 are cytoplasmic; the sequence is GTQSFVFQRE…LTTYLFGQDS (193 aa). The important for ligand-binding stretch occupies residues 99–106; it reads SLSEYVLL. A C-terminal hydrophobic region region spans residues 177–223; that stretch reads VIPSTLAFALSDTIFSTQDFLTLFYTLRAYARGLRLELTTYLFGQDS.

Belongs to the ERG2 family. Homotrimer. Forms a ternary complex with ANK2 and ITPR3. The complex is disrupted by agonists. Interacts with KCNA4. Interacts with KCNA2; cocaine consumption leads to increased interaction. Interacts with RNF112 in an oxidative stress-regulated manner.

The protein resides in the nucleus inner membrane. Its subcellular location is the nucleus outer membrane. It localises to the nucleus envelope. The protein localises to the cytoplasmic vesicle. It is found in the endoplasmic reticulum membrane. The protein resides in the membrane. Its subcellular location is the lipid droplet. It localises to the cell junction. The protein localises to the cell membrane. It is found in the cell projection. The protein resides in the growth cone. Its subcellular location is the postsynaptic density membrane. In terms of biological role, functions in lipid transport from the endoplasmic reticulum and is involved in a wide array of cellular functions probably through regulation of the biogenesis of lipid microdomains at the plasma membrane. Involved in the regulation of different receptors it plays a role in BDNF signaling and EGF signaling. Also regulates ion channels like the potassium channel and could modulate neurotransmitter release. Plays a role in calcium signaling through modulation together with ANK2 of the ITP3R-dependent calcium efflux at the endoplasmic reticulum. Plays a role in several other cell functions including proliferation, survival and death. Originally identified for its ability to bind various psychoactive drugs it is involved in learning processes, memory and mood alteration. Necessary for proper mitochondrial axonal transport in motor neurons, in particular the retrograde movement of mitochondria. Plays a role in protecting cells against oxidative stress-induced cell death via its interaction with RNF112. The protein is Sigma non-opioid intracellular receptor 1 (SIGMAR1) of Trichosurus vulpecula (Brush-tailed possum).